Here is a 363-residue protein sequence, read N- to C-terminus: Ribosomal RNA large subunit methyltransferase M (363 aa).

Residues Ser194, Cys227–Gly230, Asp246, Asp266, and Asp284 contribute to the S-adenosyl-L-methionine site. Residue Lys313 is the Proton acceptor of the active site.

It belongs to the class I-like SAM-binding methyltransferase superfamily. RNA methyltransferase RlmE family. RlmM subfamily. In terms of assembly, monomer.

It is found in the cytoplasm. The catalysed reaction is cytidine(2498) in 23S rRNA + S-adenosyl-L-methionine = 2'-O-methylcytidine(2498) in 23S rRNA + S-adenosyl-L-homocysteine + H(+). In terms of biological role, catalyzes the 2'-O-methylation at nucleotide C2498 in 23S rRNA. This is Ribosomal RNA large subunit methyltransferase M from Haemophilus influenzae (strain PittGG).